We begin with the raw amino-acid sequence, 299 residues long: Oxygen-dependent coproporphyrinogen-III oxidase (299 aa).

A substrate-binding site is contributed by Ser92. His96 and His106 together coordinate a divalent metal cation. The Proton donor role is filled by His106. Position 108–110 (108–110) interacts with substrate; that stretch reads NVR. A divalent metal cation contacts are provided by His145 and His175. The segment at 240 to 275 is important for dimerization; the sequence is YVEFNLVWDRGTLFGLQTGGRTESILMSMPPLVRWE. 258-260 provides a ligand contact to substrate; it reads GGR.

This sequence belongs to the aerobic coproporphyrinogen-III oxidase family. As to quaternary structure, homodimer. Requires a divalent metal cation as cofactor.

Its subcellular location is the cytoplasm. It catalyses the reaction coproporphyrinogen III + O2 + 2 H(+) = protoporphyrinogen IX + 2 CO2 + 2 H2O. It participates in porphyrin-containing compound metabolism; protoporphyrin-IX biosynthesis; protoporphyrinogen-IX from coproporphyrinogen-III (O2 route): step 1/1. Its function is as follows. Involved in the heme biosynthesis. Catalyzes the aerobic oxidative decarboxylation of propionate groups of rings A and B of coproporphyrinogen-III to yield the vinyl groups in protoporphyrinogen-IX. The chain is Oxygen-dependent coproporphyrinogen-III oxidase from Klebsiella pneumoniae subsp. pneumoniae (strain ATCC 700721 / MGH 78578).